A 455-amino-acid polypeptide reads, in one-letter code: Kynurenine 3-monooxygenase (455 aa).

This sequence belongs to the aromatic-ring hydroxylase family. KMO subfamily. It depends on FAD as a cofactor.

It catalyses the reaction L-kynurenine + NADPH + O2 + H(+) = 3-hydroxy-L-kynurenine + NADP(+) + H2O. Its pathway is cofactor biosynthesis; NAD(+) biosynthesis; quinolinate from L-kynurenine: step 1/3. Catalyzes the hydroxylation of L-kynurenine (L-Kyn) to form 3-hydroxy-L-kynurenine (L-3OHKyn). Required for synthesis of quinolinic acid. The protein is Kynurenine 3-monooxygenase of Xanthomonas euvesicatoria pv. vesicatoria (strain 85-10) (Xanthomonas campestris pv. vesicatoria).